The chain runs to 201 residues: Recombination protein RecR (201 aa).

The segment at 60-75 (CSVCGNVDTIDPCSIC) adopts a C4-type zinc-finger fold. Residues 83 to 178 (ATIIVVEDIA…KVTRLAHGVP (96 aa)) enclose the Toprim domain.

Belongs to the RecR family.

May play a role in DNA repair. It seems to be involved in an RecBC-independent recombinational process of DNA repair. It may act with RecF and RecO. The protein is Recombination protein RecR of Bartonella henselae (strain ATCC 49882 / DSM 28221 / CCUG 30454 / Houston 1) (Rochalimaea henselae).